Consider the following 328-residue polypeptide: Malate dehydrogenase (328 aa).

Residue 12 to 18 (GAAGQIG) coordinates NAD(+). The substrate site is built by Arg95 and Arg101. Residues Asn108, Gln115, and 132-134 (VGN) each bind NAD(+). Substrate is bound by residues Asn134 and Arg165. His190 acts as the Proton acceptor in catalysis.

Belongs to the LDH/MDH superfamily. MDH type 2 family.

The enzyme catalyses (S)-malate + NAD(+) = oxaloacetate + NADH + H(+). Its function is as follows. Catalyzes the reversible oxidation of malate to oxaloacetate. This is Malate dehydrogenase from Polaromonas naphthalenivorans (strain CJ2).